Consider the following 301-residue polypeptide: Ribosomal RNA small subunit methyltransferase H (301 aa).

S-adenosyl-L-methionine is bound by residues 35 to 37 (GGH), Asp55, Phe84, Asp105, and Gln112.

This sequence belongs to the methyltransferase superfamily. RsmH family.

The protein localises to the cytoplasm. The catalysed reaction is cytidine(1402) in 16S rRNA + S-adenosyl-L-methionine = N(4)-methylcytidine(1402) in 16S rRNA + S-adenosyl-L-homocysteine + H(+). Specifically methylates the N4 position of cytidine in position 1402 (C1402) of 16S rRNA. The polypeptide is Ribosomal RNA small subunit methyltransferase H (Chloroflexus aggregans (strain MD-66 / DSM 9485)).